The chain runs to 65 residues: Large ribosomal subunit protein bL31 (65 aa).

Residues cysteine 16, cysteine 18, cysteine 36, and cysteine 39 each coordinate Zn(2+).

The protein belongs to the bacterial ribosomal protein bL31 family. Type A subfamily. In terms of assembly, part of the 50S ribosomal subunit. Zn(2+) serves as cofactor.

Binds the 23S rRNA. The protein is Large ribosomal subunit protein bL31 of Geobacter sulfurreducens (strain ATCC 51573 / DSM 12127 / PCA).